Consider the following 476-residue polypeptide: Ribulose bisphosphate carboxylase large chain (476 aa).

Residues Asn124 and Thr174 each contribute to the substrate site. Residue Lys176 is the Proton acceptor of the active site. Lys178 is a substrate binding site. Mg(2+) contacts are provided by Lys202, Asp204, and Glu205. Lys202 is subject to N6-carboxylysine. His295 (proton acceptor) is an active-site residue. Substrate is bound by residues Arg296, His328, and Ser380.

This sequence belongs to the RuBisCO large chain family. Type I subfamily. As to quaternary structure, heterohexadecamer of 8 large chains and 8 small chains; disulfide-linked. The disulfide link is formed within the large subunit homodimers. Requires Mg(2+) as cofactor. The disulfide bond which can form in the large chain dimeric partners within the hexadecamer appears to be associated with oxidative stress and protein turnover.

It is found in the carboxysome. It carries out the reaction 2 (2R)-3-phosphoglycerate + 2 H(+) = D-ribulose 1,5-bisphosphate + CO2 + H2O. The enzyme catalyses D-ribulose 1,5-bisphosphate + O2 = 2-phosphoglycolate + (2R)-3-phosphoglycerate + 2 H(+). In terms of biological role, ruBisCO catalyzes two reactions: the carboxylation of D-ribulose 1,5-bisphosphate, the primary event in carbon dioxide fixation, as well as the oxidative fragmentation of the pentose substrate in the photorespiration process. Both reactions occur simultaneously and in competition at the same active site. This Nostoc punctiforme (strain ATCC 29133 / PCC 73102) protein is Ribulose bisphosphate carboxylase large chain.